The primary structure comprises 597 residues: Zinc finger CCCH domain-containing protein 29 (597 aa).

2 ANK repeats span residues Glu-76–Arg-106 and Glu-111–Cys-143. C3H1-type zinc fingers lie at residues Pro-254 to Phe-281 and Gln-289 to Asp-313. The segment covering Ala-320 to Glu-337 has biased composition (polar residues). A disordered region spans residues Ala-320–Met-341.

As to expression, expressed in roots and anthers.

Its subcellular location is the nucleus. Involved in salt stress response. May positively modulate plant tolerance to salt stress. The chain is Zinc finger CCCH domain-containing protein 29 from Arabidopsis thaliana (Mouse-ear cress).